Reading from the N-terminus, the 579-residue chain is Laccase-24 (579 aa).

The N-terminal stretch at 1–23 (MARSWSLLLLPFALALVASVAQA) is a signal peptide. 2 consecutive Plastocyanin-like domains span residues 31–148 (NVGN…PRGG) and 159–322 (EEVV…YGGG). Residues Asn-34 and Asn-78 are each glycosylated (N-linked (GlcNAc...) asparagine). 2 residues coordinate Cu cation: His-82 and His-84. Residues Asn-110 and Asn-116 are each glycosylated (N-linked (GlcNAc...) asparagine). His-127 and His-129 together coordinate Cu cation. N-linked (GlcNAc...) asparagine glycans are attached at residues Asn-204, Asn-209, Asn-219, Asn-241, Asn-312, Asn-337, Asn-348, Asn-398, Asn-405, Asn-444, and Asn-462. The Plastocyanin-like 3 domain occupies 425–563 (DFPDTPPIVF…GMVFEVQNGP (139 aa)). Cu cation contacts are provided by His-480, His-483, and His-485. Asn-500 is a glycosylation site (N-linked (GlcNAc...) asparagine). His-542, Cys-543, His-544, and His-548 together coordinate Cu cation.

It belongs to the multicopper oxidase family. It depends on Cu cation as a cofactor.

It is found in the secreted. The protein localises to the extracellular space. Its subcellular location is the apoplast. It catalyses the reaction 4 hydroquinone + O2 = 4 benzosemiquinone + 2 H2O. In terms of biological role, lignin degradation and detoxification of lignin-derived products. The protein is Laccase-24 (LAC24) of Oryza sativa subsp. japonica (Rice).